Consider the following 171-residue polypeptide: Lipoprotein signal peptidase (171 aa).

A run of 3 helical transmembrane segments spans residues 7–27, 64–84, and 88–108; these read GLIA…WLYF, LGRW…SVWM, and GSRL…GNAI. Active-site residues include Asp118 and Asp136. A helical membrane pass occupies residues 128-148; it reads SWYVFNVADAAIVAGVVGLIL.

The protein belongs to the peptidase A8 family.

The protein localises to the cell inner membrane. It catalyses the reaction Release of signal peptides from bacterial membrane prolipoproteins. Hydrolyzes -Xaa-Yaa-Zaa-|-(S,diacylglyceryl)Cys-, in which Xaa is hydrophobic (preferably Leu), and Yaa (Ala or Ser) and Zaa (Gly or Ala) have small, neutral side chains.. It functions in the pathway protein modification; lipoprotein biosynthesis (signal peptide cleavage). Functionally, this protein specifically catalyzes the removal of signal peptides from prolipoproteins. The polypeptide is Lipoprotein signal peptidase (Methylorubrum extorquens (strain PA1) (Methylobacterium extorquens)).